Reading from the N-terminus, the 144-residue chain is Large ribosomal subunit protein uL16 (144 aa).

A compositionally biased stretch (basic residues) spans 1 to 19 (MLLPKRVKYRRQHRPKTTG). The disordered stretch occupies residues 1–26 (MLLPKRVKYRRQHRPKTTGRSKGGNE).

Belongs to the universal ribosomal protein uL16 family. In terms of assembly, part of the 50S ribosomal subunit.

In terms of biological role, binds 23S rRNA and is also seen to make contacts with the A and possibly P site tRNAs. In Macrococcus caseolyticus (strain JCSC5402) (Macrococcoides caseolyticum), this protein is Large ribosomal subunit protein uL16.